Reading from the N-terminus, the 139-residue chain is FLYWCH family member 2 (139 aa).

Disordered regions lie at residues 1-36 and 86-139; these read MPQPKPSEQEGESMKASQEPAPQPGTDVVPAAPRKP and EAQR…STSP. Residues 98 to 107 show a composition bias toward basic and acidic residues; that stretch reads PEQKRSKQNL. Residues 120-130 are compositionally biased toward low complexity; the sequence is VSSSSSEETTV.

The sequence is that of FLYWCH family member 2 (Flywch2) from Mus musculus (Mouse).